A 325-amino-acid chain; its full sequence is ATP-dependent (S)-NAD(P)H-hydrate dehydratase (325 aa).

The region spanning 9–315 (LLKKVYNMVP…EHVHTAFLNV (307 aa)) is the YjeF C-terminal domain. Residues G119 and 172-178 (NVVEFGR) each bind (6S)-NADPHX. ATP is bound by residues 211-215 (KGAKD) and 230-239 (GGLKRSGGQG). Residue D240 coordinates (6S)-NADPHX.

This sequence belongs to the NnrD/CARKD family. Mg(2+) serves as cofactor.

The protein resides in the cytoplasm. The enzyme catalyses (6S)-NADHX + ATP = ADP + phosphate + NADH + H(+). The catalysed reaction is (6S)-NADPHX + ATP = ADP + phosphate + NADPH + H(+). Catalyzes the dehydration of the S-form of NAD(P)HX at the expense of ATP, which is converted to ADP. Together with NAD(P)HX epimerase, which catalyzes the epimerization of the S- and R-forms, the enzyme allows the repair of both epimers of NAD(P)HX, a damaged form of NAD(P)H that is a result of enzymatic or heat-dependent hydration. The sequence is that of ATP-dependent (S)-NAD(P)H-hydrate dehydratase from Phaeosphaeria nodorum (strain SN15 / ATCC MYA-4574 / FGSC 10173) (Glume blotch fungus).